A 359-amino-acid polypeptide reads, in one-letter code: Guanine nucleotide-binding protein alpha-4 subunit (359 aa).

Residue Gly-2 is the site of N-myristoyl glycine attachment. Cys-3 is lipidated: S-palmitoyl cysteine. The 329-residue stretch at 31–359 (GEIKLLLLGA…RNNLYLCGLY (329 aa)) folds into the G-alpha domain. A G1 motif region spans residues 34-47 (KLLLLGAGESGKST). Residues 39–46 (GAGESGKS), 178–184 (LRARVKS), 203–207 (DVGGQ), 272–275 (NKMD), and Ala-331 each bind GTP. Residue Ser-46 participates in Mg(2+) binding. The tract at residues 176 to 184 (DILRARVKS) is G2 motif. The interval 199–208 (FKMFDVGGQR) is G3 motif. Residues 268–275 (ILFLNKMD) are G4 motif. The segment at 329–334 (TCATDT) is G5 motif.

It belongs to the G-alpha family. G(i/o/t/z) subfamily. G proteins are composed of 3 units; alpha, beta and gamma. The alpha chain contains the guanine nucleotide binding site. Expressed in ASI neurons.

Its function is as follows. Guanine nucleotide-binding proteins (G proteins) are involved as modulators or transducers in various transmembrane signaling systems. Acts in concert with npr-15 to activate TGF-beta-like daf-7 secretion in the ASI neuron, thereby promoting larval development and inhibition of dauer diapause. In Caenorhabditis elegans, this protein is Guanine nucleotide-binding protein alpha-4 subunit (gpa-4).